The primary structure comprises 620 residues: Dihydroxy-acid dehydratase (620 aa).

Residue aspartate 82 coordinates Mg(2+). Residue cysteine 123 participates in [2Fe-2S] cluster binding. Mg(2+) contacts are provided by aspartate 124 and lysine 125. Lysine 125 is subject to N6-carboxylysine. Cysteine 197 serves as a coordination point for [2Fe-2S] cluster. Glutamate 493 is a binding site for Mg(2+). Serine 519 serves as the catalytic Proton acceptor.

The protein belongs to the IlvD/Edd family. Homodimer. It depends on [2Fe-2S] cluster as a cofactor. Mg(2+) is required as a cofactor.

The catalysed reaction is (2R)-2,3-dihydroxy-3-methylbutanoate = 3-methyl-2-oxobutanoate + H2O. It catalyses the reaction (2R,3R)-2,3-dihydroxy-3-methylpentanoate = (S)-3-methyl-2-oxopentanoate + H2O. Its pathway is amino-acid biosynthesis; L-isoleucine biosynthesis; L-isoleucine from 2-oxobutanoate: step 3/4. It participates in amino-acid biosynthesis; L-valine biosynthesis; L-valine from pyruvate: step 3/4. Functions in the biosynthesis of branched-chain amino acids. Catalyzes the dehydration of (2R,3R)-2,3-dihydroxy-3-methylpentanoate (2,3-dihydroxy-3-methylvalerate) into 2-oxo-3-methylpentanoate (2-oxo-3-methylvalerate) and of (2R)-2,3-dihydroxy-3-methylbutanoate (2,3-dihydroxyisovalerate) into 2-oxo-3-methylbutanoate (2-oxoisovalerate), the penultimate precursor to L-isoleucine and L-valine, respectively. This chain is Dihydroxy-acid dehydratase, found in Bifidobacterium longum subsp. infantis (strain ATCC 15697 / DSM 20088 / JCM 1222 / NCTC 11817 / S12).